The following is a 244-amino-acid chain: MSLEERMRKAERTLLAVLLDPAKLDDEGARKLARAASEGGADLIFVGGSIGAGFRINEIILSVKKESNIPIILFPGNVDGVSPYADAILFMSLLNSTNPYWIIQAQALAAIPIRRMGLEAIPTAYLIVEPGQRSAAGWVGSVNPIPRDKPEIALAYATAAEMLGMRWIYLEAGSGAEAPVPSEMVRLVRERTNLGIIVGGGLRSPELVRERAEAGANVIVVGTHIEEGRDALASVREMKEALKS.

The Mg(2+) site is built by Asp-20 and Ser-49. Sn-glycerol 1-phosphate-binding positions include 169-175, 200-201, and 222-223; these read YLEAGSG, GG, and GT.

The protein belongs to the GGGP/HepGP synthase family. Group II subfamily. Mg(2+) is required as a cofactor.

The protein localises to the cytoplasm. It carries out the reaction sn-glycerol 1-phosphate + (2E,6E,10E)-geranylgeranyl diphosphate = sn-3-O-(geranylgeranyl)glycerol 1-phosphate + diphosphate. The protein operates within membrane lipid metabolism; glycerophospholipid metabolism. In terms of biological role, prenyltransferase that catalyzes the transfer of the geranylgeranyl moiety of geranylgeranyl diphosphate (GGPP) to the C3 hydroxyl of sn-glycerol-1-phosphate (G1P). This reaction is the first ether-bond-formation step in the biosynthesis of archaeal membrane lipids. The chain is Geranylgeranylglyceryl phosphate synthase from Korarchaeum cryptofilum (strain OPF8).